Consider the following 287-residue polypeptide: tRNA pseudouridine synthase B (287 aa).

Residue D38 is the Nucleophile of the active site.

It belongs to the pseudouridine synthase TruB family. Type 1 subfamily.

The catalysed reaction is uridine(55) in tRNA = pseudouridine(55) in tRNA. Responsible for synthesis of pseudouridine from uracil-55 in the psi GC loop of transfer RNAs. This is tRNA pseudouridine synthase B from Fusobacterium nucleatum subsp. nucleatum (strain ATCC 25586 / DSM 15643 / BCRC 10681 / CIP 101130 / JCM 8532 / KCTC 2640 / LMG 13131 / VPI 4355).